The following is a 136-amino-acid chain: Histone H3.3 (136 aa).

Positions M1–R41 are disordered. K5 carries the post-translational modification N6,N6,N6-trimethyllysine; alternate. Position 5 is an N6,N6-dimethyllysine; alternate (K5). An N6-methyllysine; alternate mark is found at K5 and K10. The residue at position 10 (K10) is an N6-acetyllysine; alternate. S11 carries the phosphoserine modification. An N6,N6-dimethyllysine; alternate modification is found at K15. Residues K15, K19, K24, K28, and K37 each carry the N6-acetyllysine; alternate modification. K19, K24, K28, and K37 each carry N6-methyllysine; alternate. N6,N6,N6-trimethyllysine; alternate occurs at positions 28 and 37. An N6,N6-dimethyllysine; alternate mark is found at K28 and K37. K57 and K65 each carry N6-acetyllysine. K80 carries the post-translational modification N6,N6,N6-trimethyllysine; alternate. K80 bears the N6,N6-dimethyllysine; alternate mark. N6-methyllysine; alternate is present on K80.

It belongs to the histone H3 family. The nucleosome is a histone octamer containing two molecules each of H2A, H2B, H3 and H4 assembled in one H3-H4 heterotetramer and two H2A-H2B heterodimers. The octamer wraps approximately 147 bp of DNA. In terms of processing, phosphorylated to form H3S10ph. H3S10ph promotes subsequent H3K14ac formation and is required for transcriptional activation through TBP recruitment to the promoters. Mono-, di- and trimethylated by the COMPASS complex to form H3K4me1/2/3. H3K4me activates gene expression by regulating transcription elongation and plays a role in telomere length maintenance. H3K4me enrichment correlates with transcription levels, and occurs in a 5' to 3' gradient with H3K4me3 enrichment at the 5'-end of genes, shifting to H3K4me2 and then H3K4me1. Methylated by SET2 to form H3K36me. H3K36me represses gene expression. Methylated by DOT1 to form H3K79me. H3K79me is required for association of SIR proteins with telomeric regions and for telomeric silencing. The COMPASS-mediated formation of H3K4me2/3 and the DOT1-mediated formation of H3K79me require H2BK123ub1. Post-translationally, acetylation of histone H3 leads to transcriptional activation. H3K14ac formation by GCN5 is promoted by H3S10ph. H3K14ac can also be formed by ESA1. H3K56ac formation occurs predominantly in newly synthesized H3 molecules during G1, S and G2/M of the cell cycle and may be involved in DNA repair.

It is found in the nucleus. The protein localises to the chromosome. In terms of biological role, core component of nucleosome. Nucleosomes wrap and compact DNA into chromatin, limiting DNA accessibility to the cellular machineries which require DNA as a template. Histones thereby play a central role in transcription regulation, DNA repair, DNA replication and chromosomal stability. DNA accessibility is regulated via a complex set of post-translational modifications of histones, also called histone code, and nucleosome remodeling. The protein is Histone H3.3 (HHT3) of Meyerozyma guilliermondii (strain ATCC 6260 / CBS 566 / DSM 6381 / JCM 1539 / NBRC 10279 / NRRL Y-324) (Yeast).